Here is a 274-residue protein sequence, read N- to C-terminus: Cell division protein FtsQ (274 aa).

A disordered region spans residues 1–24 (MRDLHAKKQRVPHNRVKKPPKERK). At 1–33 (MRDLHAKKQRVPHNRVKKPPKERKPINWGPILK) the chain is on the cytoplasmic side. The segment covering 7 to 21 (KKQRVPHNRVKKPPK) has biased composition (basic residues). A helical transmembrane segment spans residues 34–56 (FASRGFGGAALCAGLGFGGWQLY). The Periplasmic segment spans residues 57–274 (NLVSRTTLLR…YADKIIVKKV (218 aa)). Residues 65–133 (LRLEAIEVSP…HTLSITVSER (69 aa)) enclose the POTRA domain.

This sequence belongs to the FtsQ/DivIB family. FtsQ subfamily.

It localises to the cell inner membrane. In terms of biological role, essential cell division protein. This chain is Cell division protein FtsQ, found in Geobacter sp. (strain M21).